A 193-amino-acid chain; its full sequence is Ion-translocating oxidoreductase complex subunit A (193 aa).

Helical transmembrane passes span 5–25 (LLLFVGTVLVNNFVLVKFLGL), 39–59 (IGMGFATTFVMTIASISSWLM), 62–82 (FILVPLDLLYLRTLSFILVIA), 102–122 (LLGIFLPLITTNCAVLGVALL), 134–154 (AVYGFGAAVGFSLVMVLFAAI), and 171–191 (SIGLITAGLMSLAFMGFSGLV).

The protein belongs to the NqrDE/RnfAE family. The complex is composed of six subunits: RnfA, RnfB, RnfC, RnfD, RnfE and RnfG.

Its subcellular location is the cell inner membrane. In terms of biological role, part of a membrane-bound complex that couples electron transfer with translocation of ions across the membrane. This is Ion-translocating oxidoreductase complex subunit A from Proteus mirabilis (strain HI4320).